The chain runs to 304 residues: Phosphoribosylaminoimidazole-succinocarboxamide synthase (304 aa).

Belongs to the SAICAR synthetase family.

It catalyses the reaction 5-amino-1-(5-phospho-D-ribosyl)imidazole-4-carboxylate + L-aspartate + ATP = (2S)-2-[5-amino-1-(5-phospho-beta-D-ribosyl)imidazole-4-carboxamido]succinate + ADP + phosphate + 2 H(+). It functions in the pathway purine metabolism; IMP biosynthesis via de novo pathway; 5-amino-1-(5-phospho-D-ribosyl)imidazole-4-carboxamide from 5-amino-1-(5-phospho-D-ribosyl)imidazole-4-carboxylate: step 1/2. The polypeptide is Phosphoribosylaminoimidazole-succinocarboxamide synthase (ADE1) (Komagataella pastoris (Yeast)).